The sequence spans 478 residues: Protein nucleotidyltransferase YdiU (478 aa).

ATP is bound by residues glycine 84, glycine 86, arginine 87, lysine 107, aspartate 119, glycine 120, arginine 170, and arginine 177. The active-site Proton acceptor is aspartate 246. Residues asparagine 247 and aspartate 256 each contribute to the Mg(2+) site. An ATP-binding site is contributed by aspartate 256.

It belongs to the SELO family. Mg(2+) is required as a cofactor. Mn(2+) serves as cofactor.

The catalysed reaction is L-seryl-[protein] + ATP = 3-O-(5'-adenylyl)-L-seryl-[protein] + diphosphate. The enzyme catalyses L-threonyl-[protein] + ATP = 3-O-(5'-adenylyl)-L-threonyl-[protein] + diphosphate. It catalyses the reaction L-tyrosyl-[protein] + ATP = O-(5'-adenylyl)-L-tyrosyl-[protein] + diphosphate. It carries out the reaction L-histidyl-[protein] + UTP = N(tele)-(5'-uridylyl)-L-histidyl-[protein] + diphosphate. The catalysed reaction is L-seryl-[protein] + UTP = O-(5'-uridylyl)-L-seryl-[protein] + diphosphate. The enzyme catalyses L-tyrosyl-[protein] + UTP = O-(5'-uridylyl)-L-tyrosyl-[protein] + diphosphate. Nucleotidyltransferase involved in the post-translational modification of proteins. It can catalyze the addition of adenosine monophosphate (AMP) or uridine monophosphate (UMP) to a protein, resulting in modifications known as AMPylation and UMPylation. The sequence is that of Protein nucleotidyltransferase YdiU from Escherichia coli O17:K52:H18 (strain UMN026 / ExPEC).